A 198-amino-acid chain; its full sequence is MICOS complex subunit MIC26 (198 aa).

The N-terminal stretch at 1 to 25 is a signal peptide; it reads MFKVIHRYVGPASLSLLTFKVYASS. A helical membrane pass occupies residues 108-128; sequence PGFFPRLGVIGFAGVVGLVLA. Ser-162 carries O-linked (Xyl...) (chondroitin sulfate) serine glycosylation.

It belongs to the apolipoprotein O/MICOS complex subunit Mic27 family. As to quaternary structure, component of the mitochondrial contact site and cristae organizing system (MICOS) complex, composed of at least MICOS10/MIC10, CHCHD3/MIC19, CHCHD6/MIC25, APOOL/MIC27, IMMT/MIC60, APOO/MIC23/MIC26 and MICOS13/MIC13. This complex was also known under the names MINOS or MitOS complex. The MICOS complex associates with mitochondrial outer membrane proteins SAMM50, MTX1 and MTX2 (together described as components of the mitochondrial outer membrane sorting assembly machinery (SAM) complex) and DNAJC11, mitochondrial inner membrane protein TMEM11 and with HSPA9. The MICOS and SAM complexes together with DNAJC11 are part of a large protein complex spanning both membranes termed the mitochondrial intermembrane space bridging (MIB) complex. Interacts with IMMT/MIC60. Interacts with MICOS10/MIC10 and APOOL/MIC27. In terms of processing, O-glycosylation; glycosaminoglycan of chondroitin-sulfate type.

It localises to the mitochondrion inner membrane. The protein resides in the secreted. The protein localises to the mitochondrion. It is found in the endoplasmic reticulum membrane. Its subcellular location is the golgi apparatus membrane. Component of the MICOS complex, a large protein complex of the mitochondrial inner membrane that plays crucial roles in the maintenance of crista junctions, inner membrane architecture, and formation of contact sites to the outer membrane. Plays a crucial role in crista junction formation and mitochondrial function. Can induce cardiac lipotoxicity by enhancing mitochondrial respiration and fatty acid metabolism in cardiac myoblasts. Promotes cholesterol efflux from macrophage cells. Detected in HDL, LDL and VLDL. Secreted by a microsomal triglyceride transfer protein (MTTP)-dependent mechanism, probably as a VLDL-associated protein that is subsequently transferred to HDL. The chain is MICOS complex subunit MIC26 (APOO) from Bos taurus (Bovine).